The chain runs to 557 residues: Chaperonin GroEL 1 (557 aa).

ATP contacts are provided by residues 29-32 (TLGP), Lys-50, 86-90 (DGTTT), Gly-416, and Asp-495.

Belongs to the chaperonin (HSP60) family. Forms a cylinder of 14 subunits composed of two heptameric rings stacked back-to-back. Interacts with the co-chaperonin GroES.

The protein resides in the cytoplasm. It catalyses the reaction ATP + H2O + a folded polypeptide = ADP + phosphate + an unfolded polypeptide.. Together with its co-chaperonin GroES, plays an essential role in assisting protein folding. The GroEL-GroES system forms a nano-cage that allows encapsulation of the non-native substrate proteins and provides a physical environment optimized to promote and accelerate protein folding. This is Chaperonin GroEL 1 from Protochlamydia amoebophila (strain UWE25).